The primary structure comprises 340 residues: Fructose-1,6-bisphosphatase class 1 (340 aa).

4 residues coordinate Mg(2+): Glu-107, Asp-126, Leu-128, and Asp-129. Asn-215 is a substrate binding site. Glu-287 lines the Mg(2+) pocket.

The protein belongs to the FBPase class 1 family. In terms of assembly, homotetramer. It depends on Mg(2+) as a cofactor.

Its subcellular location is the cytoplasm. It catalyses the reaction beta-D-fructose 1,6-bisphosphate + H2O = beta-D-fructose 6-phosphate + phosphate. It functions in the pathway carbohydrate biosynthesis; gluconeogenesis. This Brucella canis (strain ATCC 23365 / NCTC 10854 / RM-666) protein is Fructose-1,6-bisphosphatase class 1.